Here is a 1381-residue protein sequence, read N- to C-terminus: Peroxisomal ATPase PEX6 (1381 aa).

Residues 1 to 10 (MTAPNSTPAS) are compositionally biased toward polar residues. Disordered regions lie at residues 1–23 (MTAP…QDKP), 247–315 (VRTS…DNLS), 333–374 (TVTG…DRPR), and 467–499 (YSSR…NPPA). A compositionally biased stretch (basic residues) spans 11-20 (SRKRVRRRRQ). Acidic residues-rich tracts occupy residues 270–284 (AEDD…AEED) and 296–315 (TDAD…DNLS). Composition is skewed to polar residues over residues 333–345 (TVTG…TGTP), 355–367 (GPGS…TATT), and 487–499 (FFEA…NPPA). ATP is bound at residue 1031–1038 (GPPGTGKT). Composition is skewed to basic and acidic residues over residues 1294 to 1305 (GAKDKDKKKEGA) and 1337 to 1350 (STKK…KAAD). Residues 1294–1381 (GAKDKDKKKE…GGDEDEGLYD (88 aa)) form a disordered region. Acidic residues predominate over residues 1372-1381 (GGDEDEGLYD).

It belongs to the AAA ATPase family. Interacts with PEX1; forming the PEX1-PEX6 AAA ATPase complex, which is composed of a heterohexamer formed by a trimer of PEX1-PEX6 dimers.

Its subcellular location is the cytoplasm. The protein localises to the cytosol. The protein resides in the peroxisome membrane. The enzyme catalyses ATP + H2O = ADP + phosphate + H(+). Functionally, component of the PEX1-PEX6 AAA ATPase complex, a protein dislocase complex that mediates the ATP-dependent extraction of the PEX5 receptor from peroxisomal membranes, an essential step for PEX5 recycling. Specifically recognizes PEX5 monoubiquitinated at 'Cys-6', and pulls it out of the peroxisome lumen through the PEX2-PEX10-PEX12 retrotranslocation channel. Extraction by the PEX1-PEX6 AAA ATPase complex is accompanied by unfolding of the TPR repeats and release of bound cargo from PEX5. This chain is Peroxisomal ATPase PEX6 (pex-6), found in Neurospora crassa (strain ATCC 24698 / 74-OR23-1A / CBS 708.71 / DSM 1257 / FGSC 987).